The following is a 380-amino-acid chain: Succinyl-diaminopimelate desuccinylase (380 aa).

Histidine 70 is a Zn(2+) binding site. The active site involves aspartate 72. Zn(2+) is bound at residue aspartate 103. The Proton acceptor role is filled by glutamate 137. 3 residues coordinate Zn(2+): glutamate 138, glutamate 166, and histidine 352.

The protein belongs to the peptidase M20A family. DapE subfamily. In terms of assembly, homodimer. Zn(2+) is required as a cofactor. Co(2+) serves as cofactor.

It catalyses the reaction N-succinyl-(2S,6S)-2,6-diaminopimelate + H2O = (2S,6S)-2,6-diaminopimelate + succinate. The protein operates within amino-acid biosynthesis; L-lysine biosynthesis via DAP pathway; LL-2,6-diaminopimelate from (S)-tetrahydrodipicolinate (succinylase route): step 3/3. Its function is as follows. Catalyzes the hydrolysis of N-succinyl-L,L-diaminopimelic acid (SDAP), forming succinate and LL-2,6-diaminopimelate (DAP), an intermediate involved in the bacterial biosynthesis of lysine and meso-diaminopimelic acid, an essential component of bacterial cell walls. This chain is Succinyl-diaminopimelate desuccinylase, found in Azoarcus sp. (strain BH72).